A 618-amino-acid polypeptide reads, in one-letter code: Proline--tRNA ligase (618 aa).

It belongs to the class-II aminoacyl-tRNA synthetase family. ProS type 1 subfamily. As to quaternary structure, homodimer.

The protein resides in the cytoplasm. The enzyme catalyses tRNA(Pro) + L-proline + ATP = L-prolyl-tRNA(Pro) + AMP + diphosphate. Its function is as follows. Catalyzes the attachment of proline to tRNA(Pro) in a two-step reaction: proline is first activated by ATP to form Pro-AMP and then transferred to the acceptor end of tRNA(Pro). As ProRS can inadvertently accommodate and process non-cognate amino acids such as alanine and cysteine, to avoid such errors it has two additional distinct editing activities against alanine. One activity is designated as 'pretransfer' editing and involves the tRNA(Pro)-independent hydrolysis of activated Ala-AMP. The other activity is designated 'posttransfer' editing and involves deacylation of mischarged Ala-tRNA(Pro). The misacylated Cys-tRNA(Pro) is not edited by ProRS. The polypeptide is Proline--tRNA ligase (Streptococcus uberis (strain ATCC BAA-854 / 0140J)).